The following is a 505-amino-acid chain: Prenylcysteine oxidase 1 (505 aa).

The N-terminal stretch at 1-27 (MGRVVAELVSSLLGLWLLLCSCGCPEG) is a signal peptide. Asparagine 196, asparagine 323, and asparagine 353 each carry an N-linked (GlcNAc...) asparagine glycan.

The protein belongs to the prenylcysteine oxidase family. It depends on FAD as a cofactor.

Its subcellular location is the lysosome. The enzyme catalyses an S-polyprenyl-L-cysteine + O2 + H2O = a polyprenal + L-cysteine + H2O2. The catalysed reaction is S-(2E,6E)-farnesyl-L-cysteine + O2 + H2O = (2E,6E)-farnesal + L-cysteine + H2O2. It catalyses the reaction [(2E,6E,10E)-geranylgeranyl]-L-cysteine + O2 + H2O = (2E,6E,10E)-geranylgeranial + L-cysteine + H2O2. Its function is as follows. Prenylcysteine oxidase that cleaves the thioether bond of prenyl-L-cysteines, such as farnesylcysteine and geranylgeranylcysteine. Only active against free prenylcysteines and not prenylcysteine residues within prenylated proteins or peptides. Involved in the final step in the degradation of prenylated proteins, by degrading prenylcysteines after the protein has been degraded. The polypeptide is Prenylcysteine oxidase 1 (Pongo abelii (Sumatran orangutan)).